Here is a 691-residue protein sequence, read N- to C-terminus: DNA ligase (691 aa).

NAD(+) contacts are provided by residues 41 to 45 (DAEYD), 90 to 91 (SL), and E130. The N6-AMP-lysine intermediate role is filled by K132. NAD(+) contacts are provided by R153, E190, K307, and K331. The Zn(2+) site is built by C425, C428, C443, and C449. Residues 610 to 691 (APQGVLAGKT…LHQLLEGNTP (82 aa)) form the BRCT domain.

This sequence belongs to the NAD-dependent DNA ligase family. LigA subfamily. Mg(2+) is required as a cofactor. It depends on Mn(2+) as a cofactor.

It catalyses the reaction NAD(+) + (deoxyribonucleotide)n-3'-hydroxyl + 5'-phospho-(deoxyribonucleotide)m = (deoxyribonucleotide)n+m + AMP + beta-nicotinamide D-nucleotide.. DNA ligase that catalyzes the formation of phosphodiester linkages between 5'-phosphoryl and 3'-hydroxyl groups in double-stranded DNA using NAD as a coenzyme and as the energy source for the reaction. It is essential for DNA replication and repair of damaged DNA. The chain is DNA ligase from Burkholderia ambifaria (strain ATCC BAA-244 / DSM 16087 / CCUG 44356 / LMG 19182 / AMMD) (Burkholderia cepacia (strain AMMD)).